The following is a 211-amino-acid chain: uncharacterized protein (211 aa).

The disordered stretch occupies residues 187 to 211; the sequence is LKVSEQENSEAPVSEPKEDEKTKKD. Basic and acidic residues predominate over residues 201–211; the sequence is EPKEDEKTKKD.

This is an uncharacterized protein from Spiroplasma citri.